A 115-amino-acid polypeptide reads, in one-letter code: Phosphoribosyl-AMP cyclohydrolase (115 aa).

Asp-80 provides a ligand contact to Mg(2+). A Zn(2+)-binding site is contributed by Cys-81. Mg(2+) contacts are provided by Asp-82 and Asp-84. Zn(2+) is bound by residues Cys-97 and Cys-104.

It belongs to the PRA-CH family. Homodimer. It depends on Mg(2+) as a cofactor. The cofactor is Zn(2+).

It is found in the cytoplasm. It catalyses the reaction 1-(5-phospho-beta-D-ribosyl)-5'-AMP + H2O = 1-(5-phospho-beta-D-ribosyl)-5-[(5-phospho-beta-D-ribosylamino)methylideneamino]imidazole-4-carboxamide. It participates in amino-acid biosynthesis; L-histidine biosynthesis; L-histidine from 5-phospho-alpha-D-ribose 1-diphosphate: step 3/9. Its function is as follows. Catalyzes the hydrolysis of the adenine ring of phosphoribosyl-AMP. The chain is Phosphoribosyl-AMP cyclohydrolase from Mycobacterium bovis (strain ATCC BAA-935 / AF2122/97).